A 338-amino-acid chain; its full sequence is POU domain, class 4, transcription factor 3 (338 aa).

The short motif at 56–65 is the POU-IV box element; that stretch reads RAEALAAVDI. A POU-specific domain is found at 179–256; sequence DVESDPRELE…VLQAWLEEAE (78 aa). The segment at residues 274-333 is a DNA-binding region (homeobox); that stretch reads RKRKRTSIAAPEKRSLEAYFAIQPRPSSEKIAAIAEKLDLKKNVVRVWFCNQRQKQKRMK.

Belongs to the POU transcription factor family. Class-4 subfamily. Interacts with ISL1. Brain. Seems to be specific to the retina.

It localises to the nucleus. The protein localises to the cytoplasm. In terms of biological role, acts as a transcriptional activator. Acts by binding to sequences related to the consensus octamer motif 5'-ATGCAAAT-3' in the regulatory regions of its target genes. Involved in the auditory system development, required for terminal differentiation of hair cells in the inner ear. The sequence is that of POU domain, class 4, transcription factor 3 (POU4F3) from Homo sapiens (Human).